A 1094-amino-acid polypeptide reads, in one-letter code: MAESSSESDHFRCRDRLSPWAARSTHRGTRSLPTVEVTEKVNTITSTLQDTSRNLRQVDQMLGRYREYSNGQAGAIEHLKESLEQSIDQLRSQRLLRNSGGRSISVTSLSASDLDGGTGSELHHFPPTSPLKDYGDPQGIKRMRSRTGVRFVQETDDMTQLHGFHQSLRDLSSEQIRLGDDFNRELSRRSRSDAETKRALEELTEKLNEAQKQEVVSDRVERRLQELEREMRTERELVERRQDQLGLMSLQLQEALKKQEAKADEHEGAIKNKLRQTETEKNQLEQELELSRRLLNQSEGSRETLLHQVEELRTQLTKAEGDRKGLQHQVSQISKQQSNYQDEQGEDWRFRRGVEREKQDLEKQMSDLRVQLNFSAMASELEEVKRCMERKDKEKAHLASQVENLTRELENGEKQQLQMLDRLKEIQNHFDTCEAERKHADLQISELTRHAEDATKQAERYLSELQQSEALKEEAEKRREDLKLKAQESIRQWKLKHKKLERALEKQSETVDELTGKNNQILKEKDELKTQLYAALQQIENLRKELNDVLTKRALQEEELHSKEEKLRDIKSHQADLELEVKNSLDTIHRLESELKKQSKIQSQMKVEKAHLEEEIAELKKSQAQDKAKLLEMQESIKDLSAIRADLANKLAEEERAKKAVLKDLSDLTAQAKSRDEETATIITQLKLERDVHQRELKDLTSSLQSVKTKHEQNIQELMKHFKKEKSEAENHIRTLKAESLEEKNMAKIHRGQLEKLKSQCDRLTEELTQNENENKKLKLKYQCLKDQLEEREKHISIEEEHLRRMEEARLQLKDQLLCLETEQESILGVIGKEIDAACKTFSKDSVEKLKVFSSGPDIHYDPHRWLAESKTKLQWLCEELKERENREKNLRHQLMLCRQQLRNLTENKESELQCLFQQIERQEQLLDEIHREKRDLLEETQRKDEEMGSLQDRVIALETSTQVALDHLESVPEKLSLLEDFKDFRDSCSSSERTDGRYSKYRVRRNSLQHHQDDTKYRTKSFKGDRTFLEGSHTRGLDHSSSWQDHSRFLSSPRFSYVNSFTKRTVAPDSASNKEDATMNGTSSQPKKEEYGS.

A disordered region spans residues 1-29 (MAESSSESDHFRCRDRLSPWAARSTHRGT). Residues 7-17 (ESDHFRCRDRL) show a composition bias toward basic and acidic residues. Ser-31 carries the phosphoserine modification. Residues 115-140 (DGGTGSELHHFPPTSPLKDYGDPQGI) form a disordered region. 2 coiled-coil regions span residues 190–827 (SRSD…QESI) and 879–959 (EELK…IALE). Phosphoserine is present on residues Ser-249, Ser-291, and Ser-331. The disordered stretch occupies residues 319–345 (AEGDRKGLQHQVSQISKQQSNYQDEQG). Over residues 328-342 (HQVSQISKQQSNYQD) the composition is skewed to polar residues. The span at 987-999 (DSCSSSERTDGRY) shows a compositional bias: basic and acidic residues. The segment at 987 to 1018 (DSCSSSERTDGRYSKYRVRRNSLQHHQDDTKY) is disordered. Over residues 1000–1009 (SKYRVRRNSL) the composition is skewed to basic residues. At Ser-1061 the chain carries Phosphoserine. Residues 1067–1094 (VAPDSASNKEDATMNGTSSQPKKEEYGS) are disordered.

It localises to the cytoplasm. The protein resides in the cytoskeleton. The protein localises to the microtubule organizing center. Its subcellular location is the centrosome. It is found in the centriole. It localises to the spindle pole. In Homo sapiens (Human), this protein is Centrosomal protein of 128 kDa (CEP128).